Consider the following 130-residue polypeptide: Sec-independent protein translocase protein TatB (130 aa).

The helical transmembrane segment at 2–22 (FANIGWGEMLVLVVVGLVVLG) threads the bilayer. Positions 108–130 (DAVASAQEAPDEPVRPPFDSDAT) are disordered.

Belongs to the TatB family. The Tat system comprises two distinct complexes: a TatABC complex, containing multiple copies of TatA, TatB and TatC subunits, and a separate TatA complex, containing only TatA subunits. Substrates initially bind to the TatABC complex, which probably triggers association of the separate TatA complex to form the active translocon.

The protein resides in the cell membrane. Its function is as follows. Part of the twin-arginine translocation (Tat) system that transports large folded proteins containing a characteristic twin-arginine motif in their signal peptide across membranes. Together with TatC, TatB is part of a receptor directly interacting with Tat signal peptides. TatB may form an oligomeric binding site that transiently accommodates folded Tat precursor proteins before their translocation. This is Sec-independent protein translocase protein TatB from Mycobacterium ulcerans (strain Agy99).